The chain runs to 906 residues: Protein translocase subunit SecA (906 aa).

ATP is bound by residues Gln-86, Gly-104–Thr-108, and Asp-499. Basic and acidic residues predominate over residues Lys-834 to Ala-847. The disordered stretch occupies residues Lys-834–Asn-887. Zn(2+)-binding residues include Cys-890, Cys-892, Cys-901, and His-902.

Belongs to the SecA family. In terms of assembly, monomer and homodimer. Part of the essential Sec protein translocation apparatus which comprises SecA, SecYEG and auxiliary proteins SecDF-YajC and YidC. Zn(2+) is required as a cofactor.

The protein localises to the cell inner membrane. It is found in the cytoplasm. It carries out the reaction ATP + H2O + cellular proteinSide 1 = ADP + phosphate + cellular proteinSide 2.. Functionally, part of the Sec protein translocase complex. Interacts with the SecYEG preprotein conducting channel. Has a central role in coupling the hydrolysis of ATP to the transfer of proteins into and across the cell membrane, serving both as a receptor for the preprotein-SecB complex and as an ATP-driven molecular motor driving the stepwise translocation of polypeptide chains across the membrane. The protein is Protein translocase subunit SecA of Rickettsia felis (strain ATCC VR-1525 / URRWXCal2) (Rickettsia azadi).